The primary structure comprises 381 residues: Bifunctional polyhydroxybutyrate synthase / ABC transporter periplasmic binding protein (381 aa).

A signal peptide spans 1–22 (MSKTFARSSLCALSMTIMTAHA).

This sequence belongs to the bacterial solute-binding protein PotD/PotF family.

It localises to the periplasm. It carries out the reaction (3R)-3-hydroxybutanoyl-CoA + [(3R)-hydroxybutanoate](n) = [(3R)-hydroxybutanoate](n+1) + CoA. In terms of biological role, catalyzes the formation of short polymers of R-3-hydroxybutyrate (cPHB). Involved in natural transformation. Probably part of the ABC transporter complex YdcSTUV. During natural transformation, may bind dsDNA and convey it to the inner membrane channel formed by YdcV. This is Bifunctional polyhydroxybutyrate synthase / ABC transporter periplasmic binding protein (ydcS) from Escherichia coli (strain K12).